The primary structure comprises 203 residues: V-type ATP synthase subunit D (203 aa).

This sequence belongs to the V-ATPase D subunit family.

Produces ATP from ADP in the presence of a proton gradient across the membrane. This chain is V-type ATP synthase subunit D, found in Thermotoga neapolitana (strain ATCC 49049 / DSM 4359 / NBRC 107923 / NS-E).